Consider the following 633-residue polypeptide: MAPQTKIDRSFSALTPALSEWIIDAVDAMGFVKTTPVQHAAIPMFMKNSDVVVEAVTGSGKTLAFLIPIVERLLREDAPTKKHHVGAIIISPTRELATQIHTVLSSLLKFHAPSAAMLEPDDEDTDMEDADTPPKPTFPPGTLKAVPQLLLGGSVTPAQDLSAFLKKSPNILIGTPGRLLELLRSPHVHCPQSSFDALVMDEADRLLDLGFKEDLQKIISRLPKQRRTGLFSASMSEAVDQLIRVGLRNPVRIAVKVKARATGEDGKIEDKRTPASLQMSYLVTPPSHKIPAMKKILSSLQPQPQKSILYLSTCFSVDYFQHVLPEVLQGYDIVPLHGKHPDKVRRKNFNKFVDSVTPSILLTTDVAARGLDIPSVDLVFQLDPPSDPKTFIHRCGRAGRAGRRGLAVTFLNPGREEDYIEFLQVRQTPISPLTTPEITVTDEDAKAVTSKIRKKVREDRALFDKAQRGFVSWVRAYSKHTASSIFRIDDLDWTELGNAWGLLTLPGMPELKKWQGDKRLGIELDLATYAYKDKAREKLRLEELERDKEEGTKKKQHKKEDREKSAWTEQKESKATKEVRREKKKSKREHERLAKMTDEERKEEDRVQAMIEQMRKKVAKQEAEDADFEGFSD.

The short motif at 11 to 39 (FSALTPALSEWIIDAVDAMGFVKTTPVQH) is the Q motif element. A Helicase ATP-binding domain is found at 42–253 (IPMFMKNSDV…RVGLRNPVRI (212 aa)). An ATP-binding site is contributed by 55-62 (AVTGSGKT). A compositionally biased stretch (acidic residues) spans 119–131 (EPDDEDTDMEDAD). The tract at residues 119 to 140 (EPDDEDTDMEDADTPPKPTFPP) is disordered. The DEAD box signature appears at 201–204 (DEAD). The Helicase C-terminal domain occupies 292–446 (AMKKILSSLQ…EITVTDEDAK (155 aa)). Residues 530-629 (AYKDKAREKL…KQEAEDADFE (100 aa)) adopt a coiled-coil conformation. Basic and acidic residues-rich tracts occupy residues 547–581 (DKEE…EVRR) and 588–623 (REHE…KQEA). The disordered stretch occupies residues 547–633 (DKEEGTKKKQ…EDADFEGFSD (87 aa)). Over residues 624-633 (EDADFEGFSD) the composition is skewed to acidic residues.

This sequence belongs to the DEAD box helicase family. DDX55/SPB4 subfamily. As to quaternary structure, component of pre-60S ribosomal complexes.

It localises to the nucleus. The protein resides in the nucleolus. It carries out the reaction ATP + H2O = ADP + phosphate + H(+). In terms of biological role, ATP-binding RNA helicase involved in the biogenesis of 60S ribosomal subunits. Binds 90S pre-ribosomal particles and dissociates from pre-60S ribosomal particles after processing of 27SB pre-rRNA. Required for the normal formation of 18S rRNA through the processing of pre-rRNAs at sites A0, A1 and A2, and the normal formation of 25S and 5.8S rRNAs through the processing of pre-rRNAs at sites C1 and C2. The sequence is that of ATP-dependent rRNA helicase SPB4 from Phaeosphaeria nodorum (strain SN15 / ATCC MYA-4574 / FGSC 10173) (Glume blotch fungus).